A 287-amino-acid polypeptide reads, in one-letter code: Protein REVEILLE 3 (287 aa).

One can recognise an HTH myb-type domain in the interval 56 to 110 (TITKSRENWTEQEHDKFLEALHLFDRDWKKIKAFVGSKTVIQIRSHAQKYFLKVQ). Residues 83–106 (WKKIKAFVGSKTVIQIRSHAQKYF) constitute a DNA-binding region (H-T-H motif). A disordered region spans residues 111-135 (KNGTKEHLPPPRPKRKANHPYPQKA).

Its subcellular location is the nucleus. Its function is as follows. Probable transcription factor. The polypeptide is Protein REVEILLE 3 (RVE3) (Arabidopsis thaliana (Mouse-ear cress)).